The primary structure comprises 90 residues: DNA-binding protein HU-alpha (90 aa).

It belongs to the bacterial histone-like protein family. Heterodimer of an alpha and a beta chain.

In terms of biological role, histone-like DNA-binding protein which is capable of wrapping DNA to stabilize it, and thus to prevent its denaturation under extreme environmental conditions. The chain is DNA-binding protein HU-alpha (hupA) from Aeromonas hydrophila.